A 399-amino-acid chain; its full sequence is Ankyrin repeat domain-containing protein 65 (399 aa).

10 ANK repeats span residues 40-69, 73-102, 106-135, 139-168, 176-205, 207-231, 235-264, 268-297, 301-330, and 334-363; these read QGWG…SVEE, AGRT…PVGA, AGRT…SAAA, TGLT…PGPA, RGWT…GLDG, LLVA…RVDA, AGAT…DPGI, HGRS…EVDA, LGLT…QVDA, and LRKT…SPTL. Residues 377 to 399 form a disordered region; sequence DLPQALPELGGGEKECEGIESTG.

The chain is Ankyrin repeat domain-containing protein 65 (ANKRD65) from Homo sapiens (Human).